The primary structure comprises 496 residues: MPSHSAAAFSATPSAARDGYVVAVRGAIVDVRFERDALPAVGDALVVTPDDLAPVLAEVQAHLSETMVRALALQTTAGLRRGTRVQAPGGPIETPVGEAVLGRLLDVTGATRDDGPALPAQIERRPIHRAAPPLASLKGTSTLFSTGIKVIDLLAPLAQGGKAAMFGGAGVGKTVLVMELIHAVVERYEGISVFAGVGERSREGHEMLLDMRTSGVLPRTVLVYGQMNEPPGARWRVPFTALTIAEYFRDERRQNVLLLMDNVFRFVQAGAEVSGLLGRMPSRVGYQPTLATEVASLQERIVSVGGVSVTAIEAVYVPADDFTDPAVTAIAAHLDSMVVLSRSMAAEGMYPAVDPIASSSILLDPLVVGEEHAAVATEVRRIIEHYRELQDVISLLGVEELGAEDRALVGRARRLQRFLTQPFAVTEAFTGEPGRSVALADTIAGCKAILAGECDTWQESSLYMIGTLDEGRQREAAAAQQSTAQQAAPAEKEPAA.

167–174 (GGAGVGKT) is a binding site for ATP. Residues 474–496 (REAAAAQQSTAQQAAPAEKEPAA) are disordered. Residues 476-489 (AAAAQQSTAQQAAP) show a composition bias toward low complexity.

The protein belongs to the ATPase alpha/beta chains family. F-type ATPases have 2 components, CF(1) - the catalytic core - and CF(0) - the membrane proton channel. CF(1) has five subunits: alpha(3), beta(3), gamma(1), delta(1), epsilon(1). CF(0) has three main subunits: a(1), b(2) and c(9-12). The alpha and beta chains form an alternating ring which encloses part of the gamma chain. CF(1) is attached to CF(0) by a central stalk formed by the gamma and epsilon chains, while a peripheral stalk is formed by the delta and b chains.

Its subcellular location is the cell inner membrane. The enzyme catalyses ATP + H2O + 4 H(+)(in) = ADP + phosphate + 5 H(+)(out). Its function is as follows. Produces ATP from ADP in the presence of a proton gradient across the membrane. The catalytic sites are hosted primarily by the beta subunits. The polypeptide is ATP synthase subunit beta 1 (Paraburkholderia xenovorans (strain LB400)).